The chain runs to 229 residues: Urease accessory protein UreF (229 aa).

The protein belongs to the UreF family. UreD, UreF and UreG form a complex that acts as a GTP-hydrolysis-dependent molecular chaperone, activating the urease apoprotein by helping to assemble the nickel containing metallocenter of UreC. The UreE protein probably delivers the nickel.

The protein localises to the cytoplasm. Required for maturation of urease via the functional incorporation of the urease nickel metallocenter. The chain is Urease accessory protein UreF from Staphylococcus aureus (strain MRSA252).